We begin with the raw amino-acid sequence, 754 residues long: Phosphoribosylformylglycinamidine synthase subunit PurL (754 aa).

The disordered stretch occupies residues 1 to 21 (MLDTVEHAATTPDQPQPYGEL). Residue His54 is part of the active site. ATP contacts are provided by Tyr57 and Lys101. Glu103 serves as a coordination point for Mg(2+). Residues 104-107 (SHNH) and Arg126 contribute to the substrate site. The Proton acceptor role is filled by His105. Asp127 lines the Mg(2+) pocket. Substrate is bound at residue Gln252. Asp280 contacts Mg(2+). Substrate is bound at residue 324–326 (ESQ). Residues Asn512 and Gly549 each coordinate ATP. Position 550 (Asn550) interacts with Mg(2+). A substrate-binding site is contributed by Ser552.

Belongs to the FGAMS family. As to quaternary structure, monomer. Part of the FGAM synthase complex composed of 1 PurL, 1 PurQ and 2 PurS subunits.

It localises to the cytoplasm. It carries out the reaction N(2)-formyl-N(1)-(5-phospho-beta-D-ribosyl)glycinamide + L-glutamine + ATP + H2O = 2-formamido-N(1)-(5-O-phospho-beta-D-ribosyl)acetamidine + L-glutamate + ADP + phosphate + H(+). Its pathway is purine metabolism; IMP biosynthesis via de novo pathway; 5-amino-1-(5-phospho-D-ribosyl)imidazole from N(2)-formyl-N(1)-(5-phospho-D-ribosyl)glycinamide: step 1/2. Part of the phosphoribosylformylglycinamidine synthase complex involved in the purines biosynthetic pathway. Catalyzes the ATP-dependent conversion of formylglycinamide ribonucleotide (FGAR) and glutamine to yield formylglycinamidine ribonucleotide (FGAM) and glutamate. The FGAM synthase complex is composed of three subunits. PurQ produces an ammonia molecule by converting glutamine to glutamate. PurL transfers the ammonia molecule to FGAR to form FGAM in an ATP-dependent manner. PurS interacts with PurQ and PurL and is thought to assist in the transfer of the ammonia molecule from PurQ to PurL. This is Phosphoribosylformylglycinamidine synthase subunit PurL from Mycobacterium bovis (strain ATCC BAA-935 / AF2122/97).